The chain runs to 125 residues: MKPNYSVNTSPKRSDEPIWWGLFGAGGTWFAMLTPITVLVLGILVPLGVIDAEAMSYERVSAFATSIIGALFIIGTLALPMWHAMHRVHHGMHDLKFHTGVIGKVACYAFAGLITALAVIFIFMI.

3 helical membrane passes run 30–50, 62–82, and 105–125; these read FAMLTPITVLVLGILVPLGVI, AFATSIIGALFIIGTLALPMW, and VACYAFAGLITALAVIFIFMI.

Belongs to the FrdD family. As to quaternary structure, part of an enzyme complex containing four subunits: a flavoprotein (FrdA), an iron-sulfur protein (FrdB), and two hydrophobic anchor proteins (FrdC and FrdD).

It is found in the cell inner membrane. Its function is as follows. Anchors the catalytic components of the fumarate reductase complex to the cell membrane, binds quinones. The chain is Fumarate reductase subunit D from Vibrio parahaemolyticus serotype O3:K6 (strain RIMD 2210633).